The sequence spans 1387 residues: MYRAGEPGKRQSGPAPPRVRSVEVARGRAGYGFTLSGQAPCVLSCVMRGSPADFVGLRAGDQILAINEINVKKASHEDVVKLIGKCSGVLRMVISEGSSHVEPSSSDEEGGLCEGKGWLRPKLDSKALGINRAERVVEEVQSGGIFNMIFESPSLCASGSEPLKLKQRSLSESAALRLDVGQDSLCTPHPSMLSKEEISKVINDDSVFTVGLDNHDDFGLDASILNVAMVVGYLGSIELPSTSSNLEHDSLQAIRGCMRRLRAEQKIHSLVTMKVMHDCVQLVTDRAGVVAEYPAEKLAFSAVCPDDRRFFGLVTMQTNDDGCLAQEDEGALRTSCHVFMVDPDLFHHKIHQGIARRFGFACTADPDTSGCLEFPASSLPVLQFISVLYRDMGELIEGVRARAFLDGDADAHQNNSTSSNSDSGIGNFNQEEKSNRVLVVDLGGGSSRHGQGSSPGWESVSGRGSQPWSAPWNGTFCHDSEAGSPLETSPNTDRFWDLTKHSGPVFHMEVPPATLRSSIPPSKRGATGSSCGFNQRWLPVHVLQEWQCGHASDQESYTDSTDGWSSVNCGTLPPPMSKIPADRYRVEGSFAQAPLSTQKRDWSRKAFGMQNLFGPHRNVRKTKEDKKSSKLGRGVALAQTSQRTSARRSFGRSRRFSLTRSLDDLESATVSDGELTGADLKDCISNNSLSSNASLPSVQSCRRLRERRVASWAVSFERLLQDPVGVRYFSDFLRKEFSEENILFWQACECFSHVPAHDKKELSYRAREIFSKFLCSKATTPVNIDSQAQLADDILNAPHPDMFKEQQLQIFNLMKFDSYTRFLKSQLYQECVLAEVEGRTLPDSQQVPSSPASKHSISSDHSNVSTPKKLSGKSKSGRSLNEDVGEEDSEKKRKGAFFSWSRSRSTGRSQKKKDHGDHAHDALHANGGLCRRESQGSVSSAGSLDLSEACRTSALERDKAAKHCCVHLPDGTSCVVAVKSGFSIKEILSGLCERHGINGAAVDLFLVGGDKPLVLHQDSSILATRDLRLGKRTLFRLDLVPINRSVGLKAKPTKPVTEVLRPVVAKYGLDLGSLLVRLSGEKEPLDLGAPISSLDGQRVILEERDPSRGKVSTEKQKGAPVKQSSAVNSSPRNHSAMGEERTLGKSNSIKIRGENGKSARDPRLSKREESIAKIGKKKYQKINLDEAEEFFELISKAQSNRADDQRGLLRKEDLVLPEFLRLPPGSSELALSSPPPVKGFSKRAVTSHGQEGAVQTEESYSDSPATSPASAQSPCSAYSPGSAHSPGSAHSPGSAHSTPGPPGTAQPGEKPTKPSCISTVQEGTTQAWRRLSPELEAGGIQTVEEEQVADLTLMGEGDISSPNSTLLPPPPLPQDTPGPTRPGTSRF.

The 77-residue stretch at 21–97 folds into the PDZ domain; sequence SVEVARGRAG…GVLRMVISEG (77 aa). 2 positions are modified to phosphoserine: serine 171 and serine 194. Lysine 195 is covalently cross-linked (Glycyl lysine isopeptide (Lys-Gly) (interchain with G-Cter in SUMO2)). The PID domain maps to 227–339; the sequence is VAMVVGYLGS…GALRTSCHVF (113 aa). Disordered regions lie at residues 409 to 428 and 442 to 488; these read ADAH…IGNF and LGGG…PLET. Over residues 412–428 the composition is skewed to polar residues; it reads HQNNSTSSNSDSGIGNF. An omega-N-methylarginine mark is found at arginine 524 and arginine 633. The tract at residues 620–650 is disordered; the sequence is RKTKEDKKSSKLGRGVALAQTSQRTSARRSF. 2 positions are modified to phosphoserine: serine 661 and serine 671. Residues 715–832 form the RGS domain; it reads SFERLLQDPV…LKSQLYQECV (118 aa). The tract at residues 842–934 is disordered; it reads PDSQQVPSSP…ANGGLCRRES (93 aa). Positions 849–869 are enriched in low complexity; it reads SSPASKHSISSDHSNVSTPKK. Serine 850 and serine 879 each carry phosphoserine. Residues 914–923 are compositionally biased toward basic and acidic residues; it reads DHGDHAHDAL. Serine 943 is modified (phosphoserine). 2 RBD domains span residues 962–1032 and 1034–1104; these read KHCC…LGKR and LFRL…LEER. A compositionally biased stretch (basic and acidic residues) spans 1103–1117; the sequence is ERDPSRGKVSTEKQK. Residues 1103–1168 form a disordered region; that stretch reads ERDPSRGKVS…ARDPRLSKRE (66 aa). Residues 1122–1133 are compositionally biased toward polar residues; that stretch reads KQSSAVNSSPRN. Over residues 1151-1168 the composition is skewed to basic and acidic residues; sequence IRGENGKSARDPRLSKRE. A GoLoco domain is found at 1187–1209; sequence AEEFFELISKAQSNRADDQRGLL. Disordered stretches follow at residues 1224–1325 and 1349–1387; these read PGSS…EGTT and ADLT…TSRF. Low complexity predominate over residues 1261 to 1280; that stretch reads SDSPATSPASAQSPCSAYSP. Residues 1315 to 1325 show a composition bias toward polar residues; that stretch reads SCISTVQEGTT. A compositionally biased stretch (pro residues) spans 1367-1380; that stretch reads LPPPPLPQDTPGPT.

Interacts with GNAI1, GNAI2 and GNAI3; the interactions are GDP-dependent. Detected in brain cortex GABAergic neurons, in striatum and substantia nigra, and in the Purkinje cell layer in the cerebellum and hippocampus (at protein level). Expressed at high levels in brain and lung and lower levels in testis, heart, and spleen.

The protein resides in the nucleus. The protein localises to the cytoplasm. It localises to the cell projection. Its subcellular location is the dendrite. It is found in the synapse. Its function is as follows. Regulates G protein-coupled receptor signaling cascades. Inhibits signal transduction by increasing the GTPase activity of G protein alpha subunits, thereby driving them into their inactive GDP-bound form. The protein is Regulator of G-protein signaling 12 (Rgs12) of Rattus norvegicus (Rat).